A 259-amino-acid chain; its full sequence is Adenylosuccinate synthetase (259 aa).

GTP contacts are provided by residues 3-9 (GDEGKGK) and 31-33 (GHT). Aspartate 4 acts as the Proton acceptor in catalysis. Mg(2+)-binding residues include aspartate 4 and glycine 31. Residue 4–7 (DEGK) participates in IMP binding. Histidine 32 (proton donor) is an active-site residue. Residues threonine 120, arginine 134, glutamine 215, and threonine 230 each coordinate IMP.

It belongs to the adenylosuccinate synthetase family. In terms of assembly, homodimer. The cofactor is Mg(2+).

It localises to the cytoplasm. The enzyme catalyses IMP + L-aspartate + GTP = N(6)-(1,2-dicarboxyethyl)-AMP + GDP + phosphate + 2 H(+). The protein operates within purine metabolism; AMP biosynthesis via de novo pathway; AMP from IMP: step 1/2. Functionally, plays an important role in the de novo pathway of purine nucleotide biosynthesis. Catalyzes the first committed step in the biosynthesis of AMP from IMP. The polypeptide is Adenylosuccinate synthetase (Aggregatibacter actinomycetemcomitans (Actinobacillus actinomycetemcomitans)).